Here is a 198-residue protein sequence, read N- to C-terminus: Glycerol-3-phosphate acyltransferase (198 aa).

The next 6 helical transmembrane spans lie at 5-25 (YLIILGIVCYFIGNISGSIAI), 55-75 (VGLATFLIDFFKGLLCAYLGF), 79-99 (GSLGILVCGLLCVIGHILPVL), 114-134 (VLLFAQPLQVLILLILFLIVV), 139-159 (YVSLGSVLGCISAVIYGLIYI), and 164-184 (YIGLIYILLGIISLFKHRSNI).

It belongs to the PlsY family. In terms of assembly, probably interacts with PlsX.

It is found in the cell membrane. It catalyses the reaction an acyl phosphate + sn-glycerol 3-phosphate = a 1-acyl-sn-glycero-3-phosphate + phosphate. It participates in lipid metabolism; phospholipid metabolism. Its function is as follows. Catalyzes the transfer of an acyl group from acyl-phosphate (acyl-PO(4)) to glycerol-3-phosphate (G3P) to form lysophosphatidic acid (LPA). This enzyme utilizes acyl-phosphate as fatty acyl donor, but not acyl-CoA or acyl-ACP. In Finegoldia magna (strain ATCC 29328 / DSM 20472 / WAL 2508) (Peptostreptococcus magnus), this protein is Glycerol-3-phosphate acyltransferase.